The sequence spans 3795 residues: MVVSAGPWSSEKAEMNILEINETLRPQLAEKKQQFRSLKEKCFLTQLAGFLANRQKKYKYEECKDLIKFMLRNERQFKEEKLAEQLKQAEELRQYKVLVHSQERELTQLREKLREGRDASRSLYEHLQALLTPDEPDKSQGQDLQEQLAEGCRLAQHLVQKLSPENDEDEDEDVQVEEAEKVLESSAPREVQKAEESKVPEDSLEECAITCSNSHGPCDSNQPHKNIKITFEEDEVNSTLVVDRESSHDECQDALNILPVPGPTSSATNVSMVVSAGPLSSEKAEMNILEINEKLRPQLAEKKQQFRNLKEKCFLTQLSGFLANQQKKYKYEECKDLIKFMLRNERQFKEEKLAEQLKQAEELRQYKVLVHAQERELTQLKEKLREGRDASRSLNEHLQALLTPYEPDKSQGQDLQEQLAEGCRLAQHLVQKLSPENDNDDDEDVQVEVAEKVQKSSAPREMQKAEEKEVPEDSLEECAITYSNSHGSYDSNQPHRKTKITFEEDKVDSTLIGSSSHVEWEDAVHIIPENESDDEEEEEKGPVSPRNLQESEEEEVPQESWDEGYSTLSIPPEMLASYQSYSSTFHSLEEQQVCMAVDIGRHRWDQVKKEDQEATGPRLSRELLDEKGPEVLQDSQDRCYSTPSGCLELTDSCQPYRSAFYILEQQRVGLAIDMDEIEKYQEVEEDQDPSCPRLSRELLDEKEPEVLQDSLDRCYSTPSGYLELPDLGQPYSSAVYSLEEQYLGLALDVDRIKKDQEEEEDQGPPCPRLSRELLEVVEPEVLQDSLDRCYSTPSSCLEQPDSCQPYGSSFYALEEKHVGFSLDVGEIEKKGKGKKRRGRRSKKERRRGRKEGEEDQNPPCPRLSRELLDEKGPEVLQDSLDRCYSTPSGCLELTDSCQPYRSAFYVLEQQRVGFAFDMDEIEKYQEVEEDQDPSCPRLSRELLDEKEPEVLQDSLDRCYSTPSGYLELPDLGQPYSSAVYSLEEQYLGLALDVDRIKKDEEEEEDQDPPCPRLSRELLEVVEPEVLQDSLDRCYSTPSSCLEQPDSCQPYGSSFYALEENHVGFSLDVGEIEKKGKGKKRRGRRSKKERRRGRKEGEEDQNPPCPRLSRELLEEKGPEVLQDSLDRCYSTPSGCLELTDSCQPYRSAFYVLEQQRVGFAVDMDEIEKYQEVEEDQDPSCPRLSRELLDEKEPEVLQDSLDRCYSTPSGYLELPDLGQPYSSAVYSLEEQYLGLALDVDRIKKDEEEEEDQDPPCPRLSRELLEVVEPEVLQDSLDRCYSTPSSCLEQPDSCQPYGSSFYALEEKHVGFSLDVGEIEKKGKGKKRRGRRSKKERRRGRKEGEEDQNPPCPRLSRELLEEKGPEVLQDSLDRCYSTPSGCLELTDSCQPYRSAFYVLEQQRVGFAVDMDEIEKYQEVEEDQDPSCPRLSRELLDEKEPEVLQDSLDRCYSTPSGYLELPDLGQPYSSAVYSLEEQYLGLALDVDRIKKDEEEEEDQDPPCPRLSRELLEVVEPEVLQDSLDRCYSTPSSCLEQPDSCQPYGSSFYALEEKHVGFSLDVGEIEKKGKGKKRRGRRSKKERRRGRKEGEEDQNPPCPRLSRELLDEKGPEVLQDSLDRCYSTPSGCLELTDSCQPYRSAFYVLEQQHVGLAVDMDEIEKYQEVEEDQDPSCPRLSRELLDEKEPEVLQDSLDRCYSTPSGYLELPDLGQPYSSAVYSLEEQYLGLALDVDRIKKDQEEEEDQGPPCPRLSRELLEVVEPEVLQDSLDRCYSTPSSCLEQPDSCQPYGSSFYALEEKHVGFSLDVGEIEKKGKGKKRRGRRSKKERRRGRKEGEEDQNPPCPRLSRELLDEKGPEVLQDSLDRCYSTPSGCLELTDSCQPYRSAFYVLEQQHVGLAVDMDEIEKYQEVEEDQDPSCPRLSRELLDEKEPEVLQDSLDRCYSTPSGYLELPDLGQPYSSAVYSLEEQYLGLALDVDRIKKDQEEEEDQGPPCPRLSRELLEVVEPEVLQDSLDRCYSTPSSCLEQPDSCQPYGSSFYALEEKHVGFSLDVGEIEKKGKGKKRRGRRSKKERRRGRKEGEEDQNPPCPRLSRELLDEKGPEVLQDSLDRCYSTPSGCLELTDSCQPYRSAFYVLEQQHVGLAVDMDEIEKYQEVEEDQDPSCPRLSRELLDEKEPEVLQDSLDRCYSTPSGYLELPDLGQPYSSAVYSLEEQYLGLALDVDRIKKDQEEEEDQGPPCPRLSRELLEVVEPEVLQDSLDRCYSTPSSCLEQPDSCQPYGSSFYALEEKHVGFSLDVGEIEKKGKGKKRRGRRSKKERRRGRKEGEEDQNPPCPRLSRELLDEKGPEVLQDSLDRCYSTPSGCLELTDSCQPYRSAFYVLEQQHVGLAVDMDEIEKYQEVEEDQDPSCPRLSRELLDEKEPEVLQDSLDRCYSTPSGYLELPDLGQPYSSAVYSLEEQYLGLALDVDRIKKDQEEEEDQDPPCPRLSRELLEVVEPEVLQDSLDRCYSTPSSCLEQPDSCQPYGSSFYALEEKHVGFSLDVGEIEKKGKGKKRRGRRSKKERRRGRKEGEEDQNPPCPRLSRELLDEKGPEVLQDSLDRCYSTPSGCLELTDSCQPYRSAFYVLEQQHVGLAVDMDEIEKYQEVEEDQDPSCPRLSRELLDEKEPEVLQDSLDRCYSTPSGYLELPDLGQPYSSAVYSLEEQYLGLALDVDRIKKDQEEEEDQGPPCPRLSRELLEVVEPEVLQDSLDRCYSTPSSCLEQPDSCQPYGSSFYALEEKHVGFSLDVGEIEKKGKGKKRRGRRSKKERRRGRKEGEEDQNPPCPRLSRELLDEKGPEVLQDSLDRCYSTPSGCLELTDSCQPYRSAFYVLEQQHVGLAVDMDEIEKYQEVEEDQDPSCPRLSRELLDEKEPEVLQDSLDRCYSTPSGYLELPDLGQPYSSAVYSLEEQYLGLALDVDRIKKDQEEEEDQGPPCPRLSRELLEVVEPEVLQDSLDRCYSTPSSCLEQPDSCQPYGSSFYALEEKHVGFSLDVGEIEKKGKGKKRRGRRSKKERRRGRKEGEEDQNPPCPRLSRELLDEKGPEVLQDSLDRCYSTPSGCLELTDSCQPYRSAFYVLEQQHVGLAVDMDEIEKYQEVEEDQDPSCPRLSRELLDEKEPEVLQDSLDRCYSTPSGYLELPDLGQPYSSAVYSLEEQYLGLALDVDRIKKDEEEEEDQDPPCPRLSRELLEVVEPEVLQDSLDRCYSTPSSCLEQPDSCQPYGSSFYALEEKHVGFSLDVGEIEKKGKGKKRRGRRSKKERRRGRKEGEEDQNPPCPRLSRELLDEKGPEVLQDSLDRCYSTPSGYLELTDSCQPYRSAFYVLEQQHVGLAVDMDEIEKYQEVEEDQDPSCPRLSRELLDEKEPEVLQDSLDRCYSTPSGYLELPDLGQPYSSAVYSLEEQYLGLALDVDRIKKDQEEEEDQGPPCPRLSRELLEVVEPEVLQDSLDRCYSTPSSCLEQPDSCQPYGSSFYALEEKHVGFSLDVGEIEKKGKGKKRRGRRSKKERRRGRKEGEEDQNPPCPRLSRELLDEKGPEVLQDSLDRCYSTPSGCLELCDSCQPYRSAFYVLEQQRVGLAVDMDEIEKYQEVEEDQDPSCPRLSRELLDEKEPEVLQDSLDRCYSTPSGYLELPDLGQPYSSAVYSLEEQYLGLALDVDKIEKKGKGKKRRGRRSKKERRRGRKEGEEDQNPPCPRLNGVLMEVEEREVLQDSLDRCYSTPSMYFELPDSFQHYRSVFYSFEEQHISFALYVDNRFFTLTVTSLHLVFQMGVIFPQ.

The stretch at 75–119 forms a coiled coil; that stretch reads RQFKEEKLAEQLKQAEELRQYKVLVHSQERELTQLREKLREGRDA. Positions 161–200 are disordered; the sequence is KLSPENDEDEDEDVQVEEAEKVLESSAPREVQKAEESKVP. Over residues 165 to 177 the composition is skewed to acidic residues; that stretch reads ENDEDEDEDVQVE. The region spanning 165-259 is the Olduvai 1 domain; the sequence is ENDEDEDEDV…ECQDALNILP (95 aa). Over residues 190–200 the composition is skewed to basic and acidic residues; it reads EVQKAEESKVP. A coiled-coil region spans residues 346–390; that stretch reads RQFKEEKLAEQLKQAEELRQYKVLVHAQERELTQLKEKLREGRDA. 41 consecutive Olduvai domains span residues 436–528, 529–600, 601–692, 695–750, 751–843, 844–936, 939–994, 995–1087, 1088–1180, 1183–1238, 1239–1331, 1332–1424, 1427–1482, 1483–1575, 1576–1668, 1671–1726, 1727–1819, 1820–1912, 1915–1970, 1971–2063, 2064–2156, 2159–2214, 2215–2307, 2308–2400, 2403–2458, 2459–2551, 2552–2644, 2647–2702, 2703–2795, 2796–2888, 2891–2946, 2947–3039, 3040–3132, 3135–3190, 3191–3283, 3284–3376, 3379–3434, 3435–3527, 3528–3620, 3623–3696, and 3697–3795; these read ENDN…HIIP, ENES…VDIG, RHRW…PSCP, SREL…LDVD, RIKK…RSKK, ERRR…PSCP, SREL…RSKK, and ERRR…IFPQ. Disordered regions lie at residues 451–475 and 520–566; these read EKVQKSSAPREMQKAEEKEVPEDSL and WEDA…EGYS. 2 stretches are compositionally biased toward acidic residues: residues 530-539 and 550-562; these read NESDDEEEEE and ESEEEEVPQESWD. The segment at 830-868 is disordered; sequence KGKGKKRRGRRSKKERRRGRKEGEEDQNPPCPRLSRELL. The span at 831–849 shows a compositional bias: basic residues; that stretch reads GKGKKRRGRRSKKERRRGR. Positions 1073 to 1109 are disordered; sequence KKGKGKKRRGRRSKKERRRGRKEGEEDQNPPCPRLSR. A compositionally biased stretch (basic residues) spans 1075–1093; that stretch reads GKGKKRRGRRSKKERRRGR. 2 disordered regions span residues 1242 to 1261 and 1318 to 1353; these read KDEEEEEDQDPPCPRLSREL and KGKGKKRRGRRSKKERRRGRKEGEEDQNPPCPRLSR. Basic residues predominate over residues 1319–1337; sequence GKGKKRRGRRSKKERRRGR. The tract at residues 1562 to 1600 is disordered; that stretch reads KGKGKKRRGRRSKKERRRGRKEGEEDQNPPCPRLSRELL. Positions 1563–1581 are enriched in basic residues; that stretch reads GKGKKRRGRRSKKERRRGR. The disordered stretch occupies residues 1806–1844; that stretch reads KGKGKKRRGRRSKKERRRGRKEGEEDQNPPCPRLSRELL. Positions 1807-1825 are enriched in basic residues; the sequence is GKGKKRRGRRSKKERRRGR. Residues 2050–2088 form a disordered region; the sequence is KGKGKKRRGRRSKKERRRGRKEGEEDQNPPCPRLSRELL. Residues 2051–2069 show a composition bias toward basic residues; that stretch reads GKGKKRRGRRSKKERRRGR. The disordered stretch occupies residues 2294 to 2332; it reads KGKGKKRRGRRSKKERRRGRKEGEEDQNPPCPRLSRELL. Residues 2295 to 2313 show a composition bias toward basic residues; the sequence is GKGKKRRGRRSKKERRRGR. The disordered stretch occupies residues 2538-2576; the sequence is KGKGKKRRGRRSKKERRRGRKEGEEDQNPPCPRLSRELL. Residues 2539-2557 show a composition bias toward basic residues; the sequence is GKGKKRRGRRSKKERRRGR. Residues 2782-2820 are disordered; sequence KGKGKKRRGRRSKKERRRGRKEGEEDQNPPCPRLSRELL. Residues 2783–2801 show a composition bias toward basic residues; the sequence is GKGKKRRGRRSKKERRRGR. A disordered region spans residues 3026-3064; the sequence is KGKGKKRRGRRSKKERRRGRKEGEEDQNPPCPRLSRELL. Over residues 3027–3045 the composition is skewed to basic residues; that stretch reads GKGKKRRGRRSKKERRRGR. Disordered regions lie at residues 3194 to 3213 and 3270 to 3308; these read KDEEEEEDQDPPCPRLSREL and KGKGKKRRGRRSKKERRRGRKEGEEDQNPPCPRLSRELL. The span at 3271–3289 shows a compositional bias: basic residues; it reads GKGKKRRGRRSKKERRRGR. 2 disordered regions span residues 3514 to 3552 and 3684 to 3716; these read KGKGKKRRGRRSKKERRRGRKEGEEDQNPPCPRLSRELL and GKGKKRRGRRSKKERRRGRKEGEEDQNPPCPRL. Basic residues-rich tracts occupy residues 3515–3533 and 3684–3702; these read GKGKKRRGRRSKKERRRGR.

This sequence belongs to the NBPF family.

It is found in the cytoplasm. The protein is NBPF family member NBPF10 of Homo sapiens (Human).